Consider the following 155-residue polypeptide: Ribosomal RNA large subunit methyltransferase H (155 aa).

Residues L73, G104, and 123–128 (LSPLTL) contribute to the S-adenosyl-L-methionine site.

The protein belongs to the RNA methyltransferase RlmH family. In terms of assembly, homodimer.

It localises to the cytoplasm. It catalyses the reaction pseudouridine(1915) in 23S rRNA + S-adenosyl-L-methionine = N(3)-methylpseudouridine(1915) in 23S rRNA + S-adenosyl-L-homocysteine + H(+). Functionally, specifically methylates the pseudouridine at position 1915 (m3Psi1915) in 23S rRNA. This chain is Ribosomal RNA large subunit methyltransferase H, found in Pseudomonas putida (strain ATCC 700007 / DSM 6899 / JCM 31910 / BCRC 17059 / LMG 24140 / F1).